We begin with the raw amino-acid sequence, 158 residues long: Cyclic pyranopterin monophosphate synthase (158 aa).

Substrate-binding positions include 75–77 (LCH) and 113–114 (ME). Residue D128 is part of the active site.

This sequence belongs to the MoaC family. In terms of assembly, homohexamer; trimer of dimers.

The catalysed reaction is (8S)-3',8-cyclo-7,8-dihydroguanosine 5'-triphosphate = cyclic pyranopterin phosphate + diphosphate. Its pathway is cofactor biosynthesis; molybdopterin biosynthesis. Its function is as follows. Catalyzes the conversion of (8S)-3',8-cyclo-7,8-dihydroguanosine 5'-triphosphate to cyclic pyranopterin monophosphate (cPMP). The sequence is that of Cyclic pyranopterin monophosphate synthase from Histophilus somni (strain 129Pt) (Haemophilus somnus).